Here is a 502-residue protein sequence, read N- to C-terminus: Na(+)/H(+) antiporter NhaB (502 aa).

11 consecutive transmembrane segments (helical) span residues 27-49 (AFLV…VLIL), 66-86 (PGGL…ESVF), 95-115 (VILL…LLLY), 128-148 (IVLS…LDAL), 149-169 (TVTA…HQFA), 241-261 (FFLQ…VTCI), 299-318 (IAAL…SLAL), 350-370 (FEEA…VAVI), 394-414 (MFFI…VATV), 450-470 (ATPN…APLI), and 477-497 (MVLM…IAVY).

This sequence belongs to the NhaB Na(+)/H(+) (TC 2.A.34) antiporter family.

It localises to the cell inner membrane. The enzyme catalyses 2 Na(+)(in) + 3 H(+)(out) = 2 Na(+)(out) + 3 H(+)(in). In terms of biological role, na(+)/H(+) antiporter that extrudes sodium in exchange for external protons. This Teredinibacter turnerae (strain ATCC 39867 / T7901) protein is Na(+)/H(+) antiporter NhaB.